Reading from the N-terminus, the 318-residue chain is Ribose-phosphate pyrophosphokinase 1 (318 aa).

96–101 is a binding site for ATP; the sequence is RQDKKD. Mg(2+) contacts are provided by aspartate 128, histidine 130, aspartate 139, and aspartate 143. Histidine 130 serves as a coordination point for ATP. Residues 212–227 form a binding of phosphoribosylpyrophosphate region; the sequence is KDRVAILVDDMADTCG.

Belongs to the ribose-phosphate pyrophosphokinase family. In terms of assembly, homodimer. The active form is probably a hexamer composed of 3 homodimers. Mg(2+) is required as a cofactor.

It carries out the reaction D-ribose 5-phosphate + ATP = 5-phospho-alpha-D-ribose 1-diphosphate + AMP + H(+). The protein operates within metabolic intermediate biosynthesis; 5-phospho-alpha-D-ribose 1-diphosphate biosynthesis; 5-phospho-alpha-D-ribose 1-diphosphate from D-ribose 5-phosphate (route I): step 1/1. With respect to regulation, activated by magnesium and inorganic phosphate. Catalyzes the synthesis of phosphoribosylpyrophosphate (PRPP) that is essential for nucleotide synthesis. This is Ribose-phosphate pyrophosphokinase 1 (PRPS1) from Macaca fascicularis (Crab-eating macaque).